Reading from the N-terminus, the 55-residue chain is uncharacterized protein (55 aa).

Transmembrane regions (helical) follow at residues 2 to 19 and 24 to 46; these read VIGL…SFIA and LLSI…FRYF.

It is found in the cell membrane. This is an uncharacterized protein from Alkalihalophilus pseudofirmus (strain ATCC BAA-2126 / JCM 17055 / OF4) (Bacillus pseudofirmus).